The sequence spans 156 residues: Small ribosomal subunit protein uS7 (156 aa).

The protein belongs to the universal ribosomal protein uS7 family. In terms of assembly, part of the 30S ribosomal subunit. Contacts proteins S9 and S11.

One of the primary rRNA binding proteins, it binds directly to 16S rRNA where it nucleates assembly of the head domain of the 30S subunit. Is located at the subunit interface close to the decoding center, probably blocks exit of the E-site tRNA. This Clostridium botulinum (strain Alaska E43 / Type E3) protein is Small ribosomal subunit protein uS7.